A 200-amino-acid polypeptide reads, in one-letter code: dITP/XTP pyrophosphatase (200 aa).

5 to 10 (TRNEGK) is a substrate binding site. The Proton acceptor role is filled by Asp67. A Mg(2+)-binding site is contributed by Asp67. Residues Ser68, 151-154 (FGYD), Lys174, and 179-180 (HR) each bind substrate.

The protein belongs to the HAM1 NTPase family. Homodimer. Mg(2+) is required as a cofactor.

The catalysed reaction is XTP + H2O = XMP + diphosphate + H(+). It carries out the reaction dITP + H2O = dIMP + diphosphate + H(+). The enzyme catalyses ITP + H2O = IMP + diphosphate + H(+). Functionally, pyrophosphatase that catalyzes the hydrolysis of nucleoside triphosphates to their monophosphate derivatives, with a high preference for the non-canonical purine nucleotides XTP (xanthosine triphosphate), dITP (deoxyinosine triphosphate) and ITP. Seems to function as a house-cleaning enzyme that removes non-canonical purine nucleotides from the nucleotide pool, thus preventing their incorporation into DNA/RNA and avoiding chromosomal lesions. The polypeptide is dITP/XTP pyrophosphatase (Streptococcus pneumoniae serotype 4 (strain ATCC BAA-334 / TIGR4)).